A 386-amino-acid polypeptide reads, in one-letter code: uncharacterized protein (386 aa).

It belongs to the mimivirus L17x/L18x family.

This is an uncharacterized protein from Acanthamoeba polyphaga mimivirus (APMV).